We begin with the raw amino-acid sequence, 369 residues long: DNA replication and repair protein RecF (369 aa).

Position 30-37 (30-37) interacts with ATP; that stretch reads GDNAQGKT.

It belongs to the RecF family.

It localises to the cytoplasm. Functionally, the RecF protein is involved in DNA metabolism; it is required for DNA replication and normal SOS inducibility. RecF binds preferentially to single-stranded, linear DNA. It also seems to bind ATP. The protein is DNA replication and repair protein RecF of Streptococcus equi subsp. zooepidemicus (strain H70).